The sequence spans 103 residues: Large ribosomal subunit protein uL24 (103 aa).

The protein belongs to the universal ribosomal protein uL24 family. As to quaternary structure, part of the 50S ribosomal subunit.

One of two assembly initiator proteins, it binds directly to the 5'-end of the 23S rRNA, where it nucleates assembly of the 50S subunit. In terms of biological role, one of the proteins that surrounds the polypeptide exit tunnel on the outside of the subunit. The polypeptide is Large ribosomal subunit protein uL24 (Roseobacter denitrificans (strain ATCC 33942 / OCh 114) (Erythrobacter sp. (strain OCh 114))).